Consider the following 460-residue polypeptide: Probable lipid II flippase MurJ (460 aa).

11 consecutive transmembrane segments (helical) span residues 4–24, 50–70, 95–115, 122–142, 155–175, 228–248, 257–277, 292–312, 336–356, 366–386, and 428–448; these read ILGAGVYSDIFFVAFKLPNLF, FASLVGLIFCGVLFMWCLLVA, IVAINFWYLLLVFITTFLGAL, FFASAYSASLLNLCMILALLI, LSYGVLLGGVAQILLHFYPLV, IASFLDTTIASFLASGSVSYL, LPLALFAIAISTALFPSIAIA, KAWFFLVGVLLLCSIGGIMLS, VFSLYLLGLLPFGLTKLFSLW, AAKISLISLFLGLAASLSLMP, and LVILFLACVEILLLLAFKSWV.

This sequence belongs to the MurJ/MviN family.

It is found in the cell inner membrane. The protein operates within cell wall biogenesis; peptidoglycan biosynthesis. In terms of biological role, involved in peptidoglycan biosynthesis. Transports lipid-linked peptidoglycan precursors from the inner to the outer leaflet of the cytoplasmic membrane. This is Probable lipid II flippase MurJ from Helicobacter pylori (strain J99 / ATCC 700824) (Campylobacter pylori J99).